A 245-amino-acid chain; its full sequence is 1-(5-phosphoribosyl)-5-[(5-phosphoribosylamino)methylideneamino] imidazole-4-carboxamide isomerase (245 aa).

D7 acts as the Proton acceptor in catalysis. D129 serves as the catalytic Proton donor.

Belongs to the HisA/HisF family.

It is found in the cytoplasm. The enzyme catalyses 1-(5-phospho-beta-D-ribosyl)-5-[(5-phospho-beta-D-ribosylamino)methylideneamino]imidazole-4-carboxamide = 5-[(5-phospho-1-deoxy-D-ribulos-1-ylimino)methylamino]-1-(5-phospho-beta-D-ribosyl)imidazole-4-carboxamide. Its pathway is amino-acid biosynthesis; L-histidine biosynthesis; L-histidine from 5-phospho-alpha-D-ribose 1-diphosphate: step 4/9. The sequence is that of 1-(5-phosphoribosyl)-5-[(5-phosphoribosylamino)methylideneamino] imidazole-4-carboxamide isomerase from Shewanella pealeana (strain ATCC 700345 / ANG-SQ1).